Consider the following 115-residue polypeptide: NADH-ubiquinone oxidoreductase chain 3 (115 aa).

3 consecutive transmembrane segments (helical) span residues 4 to 24 (LLVI…AFWL), 55 to 75 (FFLV…LLPI), and 84 to 104 (INMV…GLAY).

It belongs to the complex I subunit 3 family. As to quaternary structure, core subunit of respiratory chain NADH dehydrogenase (Complex I) which is composed of 45 different subunits. Interacts with TMEM186. Interacts with TMEM242.

It is found in the mitochondrion inner membrane. The catalysed reaction is a ubiquinone + NADH + 5 H(+)(in) = a ubiquinol + NAD(+) + 4 H(+)(out). In terms of biological role, core subunit of the mitochondrial membrane respiratory chain NADH dehydrogenase (Complex I) which catalyzes electron transfer from NADH through the respiratory chain, using ubiquinone as an electron acceptor. Essential for the catalytic activity of complex I. The polypeptide is NADH-ubiquinone oxidoreductase chain 3 (Ochrotomys nuttalli (Golden mouse)).